We begin with the raw amino-acid sequence, 247 residues long: Sortase A (247 aa).

At 1–9 (MRNKKKLHG) the chain is on the cytoplasmic side. Residues 10-30 (FFNFVRWLLVVLLIIVGLALV) form a helical membrane-spanning segment. Residues 31–247 (FNKPIRNAFI…FSKKYNQINL (217 aa)) are Extracellular-facing. His140 (proton donor/acceptor) is an active-site residue. Catalysis depends on Cys206, which acts as the Acyl-thioester intermediate.

Belongs to the bacterial sortase family. Class A subfamily.

The protein resides in the cell membrane. Transpeptidase that anchors surface proteins to the cell wall. Recognizes and modifies its substrate by proteolytic cleavage of a C-terminal sorting signal. Following cleavage, a covalent intermediate is formed via a thioester bond between the sortase and its substrate, which is then transferred and covalently attached to the cell wall. This sortase recognizes a Leu-Pro-x-Thr-Gly (LPXTG) motif, which is cleaved by the sortase between the threonine and glycine residues. Essential for adherence to eukaryotic cells and for binding to fibronectin and fibrinogen. This Streptococcus agalactiae serotype III (strain NEM316) protein is Sortase A.